Consider the following 153-residue polypeptide: Cytochrome c-type biogenesis protein CcmE (153 aa).

Over 1-8 the chain is Cytoplasmic; the sequence is MMTPRQRR. A helical; Signal-anchor for type II membrane protein transmembrane segment spans residues 9–29; the sequence is MTWVALMVAGVSLAAFFALTA. Topologically, residues 30 to 153 are periplasmic; the sequence is FQKNLLYFYT…PADYSEYRKK (124 aa). 2 residues coordinate heme: His124 and Tyr128. The interval 134 to 153 is disordered; the sequence is AESLKKNGGLPADYSEYRKK.

Belongs to the CcmE/CycJ family.

It is found in the cell inner membrane. Heme chaperone required for the biogenesis of c-type cytochromes. Transiently binds heme delivered by CcmC and transfers the heme to apo-cytochromes in a process facilitated by CcmF and CcmH. The protein is Cytochrome c-type biogenesis protein CcmE of Methylococcus capsulatus (strain ATCC 33009 / NCIMB 11132 / Bath).